The following is a 293-amino-acid chain: 33 kDa chaperonin (293 aa).

Cystine bridges form between Cys237/Cys239 and Cys271/Cys274.

It belongs to the HSP33 family. Under oxidizing conditions two disulfide bonds are formed involving the reactive cysteines. Under reducing conditions zinc is bound to the reactive cysteines and the protein is inactive.

Its subcellular location is the cytoplasm. Functionally, redox regulated molecular chaperone. Protects both thermally unfolding and oxidatively damaged proteins from irreversible aggregation. Plays an important role in the bacterial defense system toward oxidative stress. In Haemophilus influenzae (strain ATCC 51907 / DSM 11121 / KW20 / Rd), this protein is 33 kDa chaperonin.